The chain runs to 456 residues: 3-isopropylmalate dehydratase large subunit (456 aa).

Residues cysteine 336, cysteine 396, and cysteine 399 each contribute to the [4Fe-4S] cluster site.

The protein belongs to the aconitase/IPM isomerase family. LeuC type 1 subfamily. In terms of assembly, heterodimer of LeuC and LeuD. Requires [4Fe-4S] cluster as cofactor.

The catalysed reaction is (2R,3S)-3-isopropylmalate = (2S)-2-isopropylmalate. The protein operates within amino-acid biosynthesis; L-leucine biosynthesis; L-leucine from 3-methyl-2-oxobutanoate: step 2/4. Its function is as follows. Catalyzes the isomerization between 2-isopropylmalate and 3-isopropylmalate, via the formation of 2-isopropylmaleate. This is 3-isopropylmalate dehydratase large subunit from Staphylococcus saprophyticus subsp. saprophyticus (strain ATCC 15305 / DSM 20229 / NCIMB 8711 / NCTC 7292 / S-41).